The sequence spans 353 residues: Uroporphyrinogen decarboxylase (353 aa).

Residues 33–37 (RQAGR), aspartate 82, tyrosine 158, serine 213, and histidine 332 contribute to the substrate site.

It belongs to the uroporphyrinogen decarboxylase family. In terms of assembly, homodimer.

The protein resides in the cytoplasm. The enzyme catalyses uroporphyrinogen III + 4 H(+) = coproporphyrinogen III + 4 CO2. It functions in the pathway porphyrin-containing compound metabolism; protoporphyrin-IX biosynthesis; coproporphyrinogen-III from 5-aminolevulinate: step 4/4. Its function is as follows. Catalyzes the decarboxylation of four acetate groups of uroporphyrinogen-III to yield coproporphyrinogen-III. This Gluconobacter oxydans (strain 621H) (Gluconobacter suboxydans) protein is Uroporphyrinogen decarboxylase.